Reading from the N-terminus, the 594-residue chain is SHC-transforming protein 3 (594 aa).

The tract at residues 98-147 is disordered; that stretch reads GSCSAPSLAAPDGSAPSAPRAPAMSAARKGRPGDEPLPRPPRGAPHASDQ. The segment covering 101 to 124 has biased composition (low complexity); that stretch reads SAPSLAAPDGSAPSAPRAPAMSAA. The 186-residue stretch at 149–334 folds into the PID domain; the sequence is LGPGVTYVVK…LDEPWTEEEG (186 aa). The tract at residues 335–498 is CH1; the sequence is DGSDHPYYNS…KMLEELQAET (164 aa). 2 disordered regions span residues 351–373 and 386–405; these read PPGG…AQFA and GDTF…SSDI. A compositionally biased stretch (polar residues) spans 393 to 405; that stretch reads WQQTPLRQGSSDI. Serine 402 bears the Phosphoserine mark. In terms of domain architecture, SH2 spans 499 to 590; sequence WYQGEMSRKE…GSELCLQQPV (92 aa).

Interacts with the Trk receptors in a phosphotyrosine-dependent manner. Once activated, binds to GRB2. Interacts with activated EGF receptors. Tyrosine phosphorylated. Mainly expressed in brain. Hardly detectable in other tissues, except in pancreas. Highly expressed in the cerebral cortex, frontal and temporal lobes, occipital pole, hippocampus, caudate nucleus and amygdala. Expressed at low level in the cerebellum, medulla and spinal cord.

Functionally, signaling adapter that couples activated growth factor receptors to signaling pathway in neurons. Involved in the signal transduction pathways of neurotrophin-activated Trk receptors in cortical neurons. This chain is SHC-transforming protein 3 (SHC3), found in Homo sapiens (Human).